Here is a 287-residue protein sequence, read N- to C-terminus: MPWPFGPSGSSEAPPPQKPRDDKVEGREPAKSWNSLLPKPDPPLQAAKEWAPVFLTAVGSLAAFMFYQSYLRRFAGAASIQENFFRKRSLLGRVTSVGDGDGFHLYHTPGGKLAGWGWLRKIPEGRSNLKGETISIRLAGIDAPEGPHFGRPGQPFAAEAQAHLSKYILHRRVRAHLHKRDQYNRIVATVSTRQPFIKKDVGLEMLKQGLATTYEAKSGVEWGGKESIYKAAEAKAKAKKLGLWSIKASEFESPRDFKNRTQGNEKSERDVEGSTVQKPWWRRWLTG.

Residues 1–40 form a disordered region; the sequence is MPWPFGPSGSSEAPPPQKPRDDKVEGREPAKSWNSLLPKP. Residues 18–30 are compositionally biased toward basic and acidic residues; the sequence is KPRDDKVEGREPA. Residues 50-67 traverse the membrane as a helical segment; sequence WAPVFLTAVGSLAAFMFY. Residues 88-246 form the TNase-like domain; that stretch reads RSLLGRVTSV…KAKKLGLWSI (159 aa). R137 is a catalytic residue. Ca(2+) is bound at residue D142. Active-site residues include E145 and R185. The segment covering 254–272 has biased composition (basic and acidic residues); the sequence is PRDFKNRTQGNEKSERDVE. A disordered region spans residues 254-278; the sequence is PRDFKNRTQGNEKSERDVEGSTVQK.

It belongs to the LCL3 family.

Its subcellular location is the mitochondrion. The protein localises to the membrane. This Verticillium alfalfae (strain VaMs.102 / ATCC MYA-4576 / FGSC 10136) (Verticillium wilt of alfalfa) protein is Probable endonuclease LCL3 (LCL3).